A 162-amino-acid chain; its full sequence is 2-C-methyl-D-erythritol 2,4-cyclodiphosphate synthase (162 aa).

Residues Asp-9 and His-11 each contribute to the a divalent metal cation site. Residues 9–11 (DVH) and 37–38 (HS) each bind 4-CDP-2-C-methyl-D-erythritol 2-phosphate. A divalent metal cation is bound at residue His-45.

Belongs to the IspF family. As to quaternary structure, homotrimer. Requires a divalent metal cation as cofactor.

It catalyses the reaction 4-CDP-2-C-methyl-D-erythritol 2-phosphate = 2-C-methyl-D-erythritol 2,4-cyclic diphosphate + CMP. The protein operates within isoprenoid biosynthesis; isopentenyl diphosphate biosynthesis via DXP pathway; isopentenyl diphosphate from 1-deoxy-D-xylulose 5-phosphate: step 4/6. Functionally, involved in the biosynthesis of isopentenyl diphosphate (IPP) and dimethylallyl diphosphate (DMAPP), two major building blocks of isoprenoid compounds. Catalyzes the conversion of 4-diphosphocytidyl-2-C-methyl-D-erythritol 2-phosphate (CDP-ME2P) to 2-C-methyl-D-erythritol 2,4-cyclodiphosphate (ME-CPP) with a corresponding release of cytidine 5-monophosphate (CMP). This is 2-C-methyl-D-erythritol 2,4-cyclodiphosphate synthase from Petrotoga mobilis (strain DSM 10674 / SJ95).